We begin with the raw amino-acid sequence, 216 residues long: Acyl-homoserine-lactone synthase (216 aa).

The protein belongs to the autoinducer synthase family.

The catalysed reaction is a fatty acyl-[ACP] + S-adenosyl-L-methionine = an N-acyl-L-homoserine lactone + S-methyl-5'-thioadenosine + holo-[ACP] + H(+). Required for the synthesis of OHHL (N-(3-oxohexanoyl)-L-homoserine lactone), an autoinducer molecule which binds to a yet uncharacterized transcriptional regulator. The protein is Acyl-homoserine-lactone synthase (eagI) of Enterobacter agglomerans (Erwinia herbicola).